Here is a 230-residue protein sequence, read N- to C-terminus: uncharacterized protein (230 aa).

A helical membrane pass occupies residues 7 to 23 (LFTASILSLGYLVFICG). The tract at residues 27-230 (KPKPTASTES…VKTEGTLKKN (204 aa)) is disordered. Residues 50-59 (AVPQKPAAPA) are compositionally biased toward low complexity. The segment covering 60–83 (AEEKAPVDPKDPKSKDVDEAKKPD) has biased composition (basic and acidic residues). Basic residues predominate over residues 101–112 (KKSKKSEKSKKK). Residues 113–173 (KTEEKVMSED…KEKSKDETVP (61 aa)) show a composition bias toward basic and acidic residues. Residues 199-210 (ETDEFPTIDEDA) show a composition bias toward acidic residues. Residues 211–230 (EKTKKTEKKDVKTEGTLKKN) are compositionally biased toward basic and acidic residues.

The protein localises to the membrane. This is an uncharacterized protein from Caenorhabditis elegans.